The chain runs to 146 residues: Large ribosomal subunit protein uL15 (146 aa).

The interval 1–46 (MKLHELQPAPGSRKKAVRVGRGIGSGNGKTAGRGHKGQKARSGGGV) is disordered. Gly residues predominate over residues 21-31 (RGIGSGNGKTA).

The protein belongs to the universal ribosomal protein uL15 family. In terms of assembly, part of the 50S ribosomal subunit.

Its function is as follows. Binds to the 23S rRNA. The sequence is that of Large ribosomal subunit protein uL15 from Geobacillus thermodenitrificans (strain NG80-2).